The sequence spans 142 residues: Nucleoside diphosphate kinase (142 aa).

Residues Lys-11, Phe-59, Arg-87, Thr-93, Arg-104, and Asn-114 each coordinate ATP. His-117 functions as the Pros-phosphohistidine intermediate in the catalytic mechanism.

Belongs to the NDK family. As to quaternary structure, homotetramer. It depends on Mg(2+) as a cofactor.

The protein resides in the cytoplasm. The enzyme catalyses a 2'-deoxyribonucleoside 5'-diphosphate + ATP = a 2'-deoxyribonucleoside 5'-triphosphate + ADP. The catalysed reaction is a ribonucleoside 5'-diphosphate + ATP = a ribonucleoside 5'-triphosphate + ADP. Major role in the synthesis of nucleoside triphosphates other than ATP. The ATP gamma phosphate is transferred to the NDP beta phosphate via a ping-pong mechanism, using a phosphorylated active-site intermediate. The polypeptide is Nucleoside diphosphate kinase (Pectobacterium atrosepticum (strain SCRI 1043 / ATCC BAA-672) (Erwinia carotovora subsp. atroseptica)).